The chain runs to 398 residues: Succinate--CoA ligase [ADP-forming] subunit beta (398 aa).

In terms of domain architecture, ATP-grasp spans 9–254; sequence KALLHEFGVP…ETEEDAKEIE (246 aa). ATP contacts are provided by residues Lys46, 53 to 55, Glu109, Ser112, and Glu117; that span reads GRG. 2 residues coordinate Mg(2+): Asn209 and Asp223. Residues Asn274 and 331-333 each bind substrate; that span reads GIM.

This sequence belongs to the succinate/malate CoA ligase beta subunit family. As to quaternary structure, heterotetramer of two alpha and two beta subunits. It depends on Mg(2+) as a cofactor.

It carries out the reaction succinate + ATP + CoA = succinyl-CoA + ADP + phosphate. The catalysed reaction is GTP + succinate + CoA = succinyl-CoA + GDP + phosphate. Its pathway is carbohydrate metabolism; tricarboxylic acid cycle; succinate from succinyl-CoA (ligase route): step 1/1. Its function is as follows. Succinyl-CoA synthetase functions in the citric acid cycle (TCA), coupling the hydrolysis of succinyl-CoA to the synthesis of either ATP or GTP and thus represents the only step of substrate-level phosphorylation in the TCA. The beta subunit provides nucleotide specificity of the enzyme and binds the substrate succinate, while the binding sites for coenzyme A and phosphate are found in the alpha subunit. This Bradyrhizobium sp. (strain BTAi1 / ATCC BAA-1182) protein is Succinate--CoA ligase [ADP-forming] subunit beta.